Here is a 540-residue protein sequence, read N- to C-terminus: Peptide chain release factor 3 (540 aa).

The tr-type G domain maps to 14 to 283 (NQRRNFAIIS…AFLDYALKPI (270 aa)). Residues 23–30 (SHPDAGKT), 91–95 (DTPGH), and 145–148 (NKLD) each bind GTP.

It belongs to the TRAFAC class translation factor GTPase superfamily. Classic translation factor GTPase family. PrfC subfamily.

It is found in the cytoplasm. Increases the formation of ribosomal termination complexes and stimulates activities of RF-1 and RF-2. It binds guanine nucleotides and has strong preference for UGA stop codons. It may interact directly with the ribosome. The stimulation of RF-1 and RF-2 is significantly reduced by GTP and GDP, but not by GMP. This is Peptide chain release factor 3 from Gloeothece citriformis (strain PCC 7424) (Cyanothece sp. (strain PCC 7424)).